Here is a 434-residue protein sequence, read N- to C-terminus: 5'-deoxyadenosine deaminase (434 aa).

Positions 63 and 65 each coordinate Zn(2+). E92 and H184 together coordinate substrate. Position 211 (H211) interacts with Zn(2+). Positions 214 and 299 each coordinate substrate. Residue D299 coordinates Zn(2+).

Belongs to the metallo-dependent hydrolases superfamily. MTA/SAH deaminase family. Homotetramer. It depends on Zn(2+) as a cofactor.

It catalyses the reaction 5'-deoxyadenosine + H2O + H(+) = 5'-deoxyinosine + NH4(+). The catalysed reaction is S-adenosyl-L-homocysteine + H2O + H(+) = S-inosyl-L-homocysteine + NH4(+). The enzyme catalyses S-methyl-5'-thioadenosine + H2O + H(+) = S-methyl-5'-thioinosine + NH4(+). It carries out the reaction adenosine + H2O + H(+) = inosine + NH4(+). It participates in amino-acid biosynthesis; S-adenosyl-L-methionine biosynthesis. Catalyzes the deamination of three SAM-derived enzymatic products, namely 5'-deoxyadenosine, S-adenosyl-L-homocysteine, and 5'-methylthioadenosine, to produce the inosine analogs. Can also deaminate adenosine. The preferred substrate for this enzyme is 5'-deoxyadenosine, but all these substrates are efficiently deaminated. Likely functions in a S-adenosyl-L-methionine (SAM) recycling pathway from S-adenosyl-L-homocysteine (SAH) produced from SAM-dependent methylation reactions. May also be involved in the recycling of 5'-deoxyadenosine, whereupon the 5'-deoxyribose moiety of 5'-deoxyinosine is further metabolized to deoxyhexoses used for the biosynthesis of aromatic amino acids in methanogens. This is 5'-deoxyadenosine deaminase from Methanococcoides burtonii (strain DSM 6242 / NBRC 107633 / OCM 468 / ACE-M).